The primary structure comprises 100 residues: Glyceraldehyde-3-phosphate dehydrogenase, testis-specific (100 aa).

NAD(+)-binding residues include Asp39 and Thr64. Residue Arg89 participates in D-glyceraldehyde 3-phosphate binding.

Belongs to the glyceraldehyde-3-phosphate dehydrogenase family. Homotetramer.

It localises to the cytoplasm. The enzyme catalyses D-glyceraldehyde 3-phosphate + phosphate + NAD(+) = (2R)-3-phospho-glyceroyl phosphate + NADH + H(+). It functions in the pathway carbohydrate degradation; glycolysis; pyruvate from D-glyceraldehyde 3-phosphate: step 1/5. Functionally, may play an important role in regulating the switch between different pathways for energy production during spermiogenesis and in the spermatozoon. Required for sperm motility and male fertility. The polypeptide is Glyceraldehyde-3-phosphate dehydrogenase, testis-specific (Mesocricetus auratus (Golden hamster)).